A 97-amino-acid chain; its full sequence is Large ribosomal subunit protein eL37 (97 aa).

An N6-acetyllysine modification is found at Lys-10. Residues Cys-19, Cys-22, Cys-34, and Cys-37 each coordinate Zn(2+). The C4-type zinc-finger motif lies at 19 to 37 (CRRCGSKAYHLQKSTCGKC). A phosphoserine mark is found at Ser-96 and Ser-97.

This sequence belongs to the eukaryotic ribosomal protein eL37 family. As to quaternary structure, component of the large ribosomal subunit.

The protein localises to the cytoplasm. Functionally, component of the large ribosomal subunit. The ribosome is a large ribonucleoprotein complex responsible for the synthesis of proteins in the cell. This chain is Large ribosomal subunit protein eL37 (RPL37), found in Bos taurus (Bovine).